The sequence spans 357 residues: tRNA N6-adenosine threonylcarbamoyltransferase (357 aa).

2 residues coordinate Fe cation: H115 and H119. Residues 137–141 (LASGG), D170, G183, and N281 contribute to the substrate site. D309 serves as a coordination point for Fe cation.

This sequence belongs to the KAE1 / TsaD family. Fe(2+) serves as cofactor.

It is found in the cytoplasm. The catalysed reaction is L-threonylcarbamoyladenylate + adenosine(37) in tRNA = N(6)-L-threonylcarbamoyladenosine(37) in tRNA + AMP + H(+). Required for the formation of a threonylcarbamoyl group on adenosine at position 37 (t(6)A37) in tRNAs that read codons beginning with adenine. Is involved in the transfer of the threonylcarbamoyl moiety of threonylcarbamoyl-AMP (TC-AMP) to the N6 group of A37, together with TsaE and TsaB. TsaD likely plays a direct catalytic role in this reaction. The protein is tRNA N6-adenosine threonylcarbamoyltransferase of Afipia carboxidovorans (strain ATCC 49405 / DSM 1227 / KCTC 32145 / OM5) (Oligotropha carboxidovorans).